A 542-amino-acid chain; its full sequence is Dihydropyrimidinase (542 aa).

Zn(2+)-binding residues include H62, H64, and K167. The residue at position 167 (K167) is an N6-carboxylysine. Y172 contributes to the substrate binding site. Residues H199 and H255 each contribute to the Zn(2+) site. Residue S331 coordinates substrate. D358 lines the Zn(2+) pocket. Substrate is bound at residue N392.

It belongs to the metallo-dependent hydrolases superfamily. Hydantoinase/dihydropyrimidinase family. As to quaternary structure, homotetramer. Zn(2+) serves as cofactor. Post-translationally, carboxylation allows a single lysine to coordinate two zinc ions.

The enzyme catalyses 5,6-dihydrouracil + H2O = 3-(carbamoylamino)propanoate + H(+). Functionally, catalyzes the second step of the reductive pyrimidine degradation, the reversible hydrolytic ring opening of dihydropyrimidines. Can catalyze the ring opening of 5,6-dihydrouracil to N-carbamyl-alanine and of 5,6-dihydrothymine to N-carbamyl-amino isobutyrate. In Lachancea kluyveri (strain ATCC 58438 / CBS 3082 / BCRC 21498 / NBRC 1685 / JCM 7257 / NCYC 543 / NRRL Y-12651) (Yeast), this protein is Dihydropyrimidinase (PYD2).